A 1300-amino-acid chain; its full sequence is Serine protease EspP (1300 aa).

A signal peptide spans 1 to 55 (MNKIYSLKYSHITGGLIAVSELSGRVSSRATGKKKHKRILALCFLGLLQSSYSFA). The region spanning 57 to 311 (QMDISNFYIR…NQTTIDNLKN (255 aa)) is the Peptidase S6 domain. Catalysis depends on charge relay system residues His127, Asp156, and Ser263. Positions 1034–1300 (DINGEAGAWA…AVNANFRYSF (267 aa)) constitute an Autotransporter domain.

Cleaved to release the mature protein from the outer membrane.

The protein localises to the periplasm. It is found in the secreted. The protein resides in the cell surface. It localises to the cell outer membrane. Inhibition of cytotoxic activity by phenylmethylsulfonyl fluoride. Serine protease capable of cleaving pepsin A and human coagulation factor V, which may contribute to the mucosal hemorrhage observed in hemorrhagic colitis. This is Serine protease EspP (espP) from Escherichia coli O157:H7.